Reading from the N-terminus, the 166-residue chain is Deglycase TK1284 (166 aa).

In terms of domain architecture, PfpI endopeptidase spans 1–166 (MKVLILSADG…WMREFVKLLR (166 aa)). Histidine 101 is a catalytic residue.

Belongs to the peptidase C56 family. As to quaternary structure, homohexamer formed by a dimer of trimers that assemble into a hollow ring structure.

The protein resides in the cytoplasm. The enzyme catalyses N(omega)-(1-hydroxy-2-oxopropyl)-L-arginyl-[protein] + H2O = lactate + L-arginyl-[protein] + H(+). It catalyses the reaction N(6)-(1-hydroxy-2-oxopropyl)-L-lysyl-[protein] + H2O = lactate + L-lysyl-[protein] + H(+). It carries out the reaction S-(1-hydroxy-2-oxopropyl)-L-cysteinyl-[protein] + H2O = lactate + L-cysteinyl-[protein] + H(+). The catalysed reaction is N(omega)-(1-hydroxy-2-oxoethyl)-L-arginyl-[protein] + H2O = L-arginyl-[protein] + glycolate + H(+). The enzyme catalyses N(6)-(1-hydroxy-2-oxoethyl)-L-lysyl-[protein] + H2O = glycolate + L-lysyl-[protein] + H(+). It catalyses the reaction S-(1-hydroxy-2-oxoethyl)-L-cysteinyl-[protein] + H2O = glycolate + L-cysteinyl-[protein] + H(+). In terms of biological role, deglycase that catalyzes the deglycation of the Maillard adducts formed between amino groups of proteins and reactive carbonyl groups of glyoxals. Thus, functions as a protein deglycase that repairs methylglyoxal- and glyoxal-glycated proteins, and releases repaired proteins and lactate or glycolate, respectively. Deglycates cysteine, arginine and lysine residues in proteins, and thus reactivates these proteins by reversing glycation by glyoxals. Acts on early glycation intermediates (hemithioacetals and aminocarbinols), preventing the formation of advanced glycation endproducts (AGE) that cause irreversible damage. Also displays proteolytic activity. The polypeptide is Deglycase TK1284 (Thermococcus kodakarensis (strain ATCC BAA-918 / JCM 12380 / KOD1) (Pyrococcus kodakaraensis (strain KOD1))).